Here is a 371-residue protein sequence, read N- to C-terminus: GDP-mannose transporter (371 aa).

The Cytoplasmic portion of the chain corresponds to M1–R51. A helical membrane pass occupies residues I52–V72. Over T73–G80 the chain is Lumenal. A helical transmembrane segment spans residues F81–I101. Over G102–K121 the chain is Cytoplasmic. The helical transmembrane segment at K122–S138 threads the bilayer. Topologically, residues K139–S145 are lumenal. The chain crosses the membrane as a helical span at residues I146–Y162. The Cytoplasmic segment spans residues G163–K171. Residues V172 to Y192 traverse the membrane as a helical segment. The Lumenal portion of the chain corresponds to G193 to A206. A helical membrane pass occupies residues L207–I227. Topologically, residues M228 to D241 are cytoplasmic. Residues T242 to E262 traverse the membrane as a helical segment. Residues D263–T281 are Lumenal-facing. N268 carries an N-linked (GlcNAc...) asparagine glycan. The helical transmembrane segment at I282 to C302 threads the bilayer. Over V303–T309 the chain is Cytoplasmic. Residues T310–F329 traverse the membrane as a helical segment. Residues F330–A332 are Lumenal-facing. Residues A333–A355 form a helical membrane-spanning segment. Residues K356–K371 lie on the Cytoplasmic side of the membrane.

The protein belongs to the TPT transporter family. SLC35D subfamily. Homooligomer.

Its subcellular location is the golgi apparatus membrane. The protein localises to the cytoplasmic vesicle membrane. It localises to the endoplasmic reticulum membrane. Its function is as follows. Involved in the import of GDP-mannose from the cytoplasm into the Golgi lumen. Involved in hyphal formation. The chain is GDP-mannose transporter (VRG4) from Candida albicans (strain SC5314 / ATCC MYA-2876) (Yeast).